Consider the following 252-residue polypeptide: Demethylmenaquinone methyltransferase (252 aa).

S-adenosyl-L-methionine is bound by residues Thr64, Asp85, and 112-113 (NA).

This sequence belongs to the class I-like SAM-binding methyltransferase superfamily. MenG/UbiE family.

It catalyses the reaction a 2-demethylmenaquinol + S-adenosyl-L-methionine = a menaquinol + S-adenosyl-L-homocysteine + H(+). The protein operates within quinol/quinone metabolism; menaquinone biosynthesis; menaquinol from 1,4-dihydroxy-2-naphthoate: step 2/2. Its function is as follows. Methyltransferase required for the conversion of demethylmenaquinol (DMKH2) to menaquinol (MKH2). The sequence is that of Demethylmenaquinone methyltransferase from Lactococcus lactis subsp. lactis (strain IL1403) (Streptococcus lactis).